A 422-amino-acid polypeptide reads, in one-letter code: Synaptotagmin-15 (422 aa).

Residues 1-4 (MAEQ) lie on the Extracellular side of the membrane. Residues 5–27 (LALVIGCIIGGLLLLIGISCCLW) traverse the membrane as a helical; Signal-anchor for type III membrane protein segment. The Cytoplasmic portion of the chain corresponds to 28-422 (KRLCTTFTYE…WHALCRPMEP (395 aa)). 2 consecutive C2 domains span residues 148-267 (CLGR…VIWR) and 279-400 (EFGD…EHWN).

Belongs to the synaptotagmin family. In terms of assembly, homodimer.

It localises to the membrane. Functionally, may be involved in the trafficking and exocytosis of secretory vesicles in non-neuronal tissues. This Rattus norvegicus (Rat) protein is Synaptotagmin-15 (Syt15).